Reading from the N-terminus, the 104-residue chain is uncharacterized protein (104 aa).

Positions 1 to 23 (MDIHDYVELIALAFWVISVVSVG) are cleaved as a signal peptide.

This is an uncharacterized protein from Lactobacillus helveticus (Lactobacillus suntoryeus).